The primary structure comprises 90 residues: UPF0367 protein Npun_R4552 (90 aa).

It belongs to the UPF0367 family.

The protein is UPF0367 protein Npun_R4552 of Nostoc punctiforme (strain ATCC 29133 / PCC 73102).